The primary structure comprises 158 residues: Transcriptional repressor NrdR (158 aa).

A zinc finger lies at 3–34 (CPFCSFPESRVLDSRPADEGNSIRRRRECGEC). The region spanning 49–139 (LVVVKKDGRR…VYRQFGDIYS (91 aa)) is the ATP-cone domain.

It belongs to the NrdR family. Requires Zn(2+) as cofactor.

Functionally, negatively regulates transcription of bacterial ribonucleotide reductase nrd genes and operons by binding to NrdR-boxes. The polypeptide is Transcriptional repressor NrdR (Desulforamulus reducens (strain ATCC BAA-1160 / DSM 100696 / MI-1) (Desulfotomaculum reducens)).